A 184-amino-acid polypeptide reads, in one-letter code: NADH-quinone oxidoreductase subunit B (184 aa).

[4Fe-4S] cluster contacts are provided by Cys63, Cys64, Cys128, and Cys158.

It belongs to the complex I 20 kDa subunit family. In terms of assembly, NDH-1 is composed of 14 different subunits. Subunits NuoB, C, D, E, F, and G constitute the peripheral sector of the complex. The cofactor is [4Fe-4S] cluster.

The protein resides in the cell inner membrane. It catalyses the reaction a quinone + NADH + 5 H(+)(in) = a quinol + NAD(+) + 4 H(+)(out). NDH-1 shuttles electrons from NADH, via FMN and iron-sulfur (Fe-S) centers, to quinones in the respiratory chain. Couples the redox reaction to proton translocation (for every two electrons transferred, four hydrogen ions are translocated across the cytoplasmic membrane), and thus conserves the redox energy in a proton gradient. The protein is NADH-quinone oxidoreductase subunit B of Xanthomonas campestris pv. campestris (strain 8004).